Consider the following 961-residue polypeptide: Outer capsid protein VP2 (961 aa).

Belongs to the orbivirus VP2 family.

The protein resides in the virion. Its function is as follows. The VP2 protein is one of the two proteins (with VP5) which constitute the virus particle outer capsid. It is the major target of the host immunogenic response. Responsible for viral attachment to target host cell, probably by binding to sialic acid. This attachment induces virion internalization predominantly through clathrin-dependent endocytosis. The chain is Outer capsid protein VP2 (Segment-2) from Antilocapra americana (Pronghorn).